The following is a 79-amino-acid chain: MAKVINNRNRKPRKKVCILSAKGIEHVDYKDVELLQRFINNNNKIASRRVTGASARMQRRIANAIKRARFVGLLPYVKE.

This sequence belongs to the bacterial ribosomal protein bS18 family. Part of the 30S ribosomal subunit. Forms a tight heterodimer with protein bS6.

Binds as a heterodimer with protein bS6 to the central domain of the 16S rRNA, where it helps stabilize the platform of the 30S subunit. The sequence is that of Small ribosomal subunit protein bS18 from Ureaplasma urealyticum serovar 10 (strain ATCC 33699 / Western).